Here is a 433-residue protein sequence, read N- to C-terminus: Succinate--CoA ligase [ADP-forming] subunit beta, mitochondrial (433 aa).

The transit peptide at 1 to 23 (MLTRSVLRKAPRAFSPFLQKRNL) directs the protein to the mitochondrion. In terms of domain architecture, ATP-grasp spans 31-273 (HDILRKFGVD…ISQEDPDEAR (243 aa)). ATP contacts are provided by residues K68, 75-77 (GRG), and E136. Mg(2+) contacts are provided by N228 and D242. Substrate contacts are provided by residues N293 and 350 to 352 (GIV).

Belongs to the succinate/malate CoA ligase beta subunit family. As to quaternary structure, heterodimer of an alpha and a beta subunit. It depends on Mg(2+) as a cofactor.

The protein resides in the mitochondrion. It carries out the reaction succinate + ATP + CoA = succinyl-CoA + ADP + phosphate. It participates in carbohydrate metabolism; tricarboxylic acid cycle; succinate from succinyl-CoA (ligase route): step 1/1. In terms of biological role, succinyl-CoA synthetase functions in the citric acid cycle (TCA), coupling the hydrolysis of succinyl-CoA to the synthesis of ATP and thus represents the only step of substrate-level phosphorylation in the TCA. The beta subunit provides nucleotide specificity of the enzyme and binds the substrate succinate, while the binding sites for coenzyme A and phosphate are found in the alpha subunit. The polypeptide is Succinate--CoA ligase [ADP-forming] subunit beta, mitochondrial (Schizosaccharomyces pombe (strain 972 / ATCC 24843) (Fission yeast)).